The following is a 331-amino-acid chain: Myc-associated zinc finger protein (331 aa).

Disordered stretches follow at residues 46-65 and 108-131; these read AQSPFQAAPAPPPTPQAPAA and TVDTAALKQPPAPPPPPPAVSAPA. The span at 117 to 127 shows a compositional bias: pro residues; the sequence is PPAPPPPPPAV. 4 C2H2-type zinc fingers span residues 177–199, 266–288, 294–316, and 324–331; these read YICALCAKEFKNGYNLRRHEAIH, HACEMCGKAFRDVYHLNRHKLSH, YQCPVCQQRFKRKDRMSYHVRSH, and YNCSHCGK.

As to quaternary structure, interacts with BPTF. Ubiquitously expressed.

The protein localises to the nucleus. In terms of biological role, transcriptional regulator. Acts as a transcriptional activator that binds to purine-rich GAGA sites found in the promoter of many genes including insulin I and II and islet amyloid polypeptide. The protein is Myc-associated zinc finger protein (MAZ) of Mesocricetus auratus (Golden hamster).